Reading from the N-terminus, the 399-residue chain is Enoyl-[acyl-carrier-protein] reductase [NADH] (399 aa).

NAD(+)-binding positions include 49–54 (GASSGY), 75–76 (FE), 112–113 (DA), and 141–142 (LA). Substrate is bound at residue Y227. The Proton donor role is filled by Y237. NAD(+) contacts are provided by residues K246 and 272-274 (VVT).

This sequence belongs to the TER reductase family. As to quaternary structure, monomer.

The enzyme catalyses a 2,3-saturated acyl-[ACP] + NAD(+) = a (2E)-enoyl-[ACP] + NADH + H(+). It functions in the pathway lipid metabolism; fatty acid biosynthesis. Its function is as follows. Involved in the final reduction of the elongation cycle of fatty acid synthesis (FAS II). Catalyzes the reduction of a carbon-carbon double bond in an enoyl moiety that is covalently linked to an acyl carrier protein (ACP). This chain is Enoyl-[acyl-carrier-protein] reductase [NADH], found in Pseudomonas putida (strain W619).